A 224-amino-acid chain; its full sequence is uncharacterized protein (224 aa).

An N-terminal signal peptide occupies residues 1-30 (MSRSSSSMATVLVVLMVVSAGGLSPPCAAA). Residue Asn141 is glycosylated (N-linked (GlcNAc...) asparagine).

The protein localises to the secreted. This is an uncharacterized protein from Oryza sativa subsp. japonica (Rice).